A 275-amino-acid chain; its full sequence is Pyridoxal phosphate homeostasis protein (275 aa).

Position 6 is a phosphoserine (Ser-6). An N6-(pyridoxal phosphate)lysine modification is found at Lys-47. Tyr-69 is subject to Phosphotyrosine. N6-succinyllysine is present on Lys-125. Ser-226 and Ser-244 each carry phosphoserine. Residues 251-263 are compositionally biased toward basic and acidic residues; sequence DYSKKPTPDKCAA. A disordered region spans residues 251-275; that stretch reads DYSKKPTPDKCAADVKAPLEVAQEH.

The protein belongs to the pyridoxal phosphate-binding protein YggS/PROSC family. In terms of tissue distribution, ubiquitous.

In terms of biological role, pyridoxal 5'-phosphate (PLP)-binding protein, which may be involved in intracellular homeostatic regulation of pyridoxal 5'-phosphate (PLP), the active form of vitamin B6. The polypeptide is Pyridoxal phosphate homeostasis protein (Homo sapiens (Human)).